A 251-amino-acid chain; its full sequence is Prolactin-7B1 (251 aa).

A signal peptide spans M1–A29. N73 carries N-linked (GlcNAc...) asparagine glycosylation. Disulfide bonds link C100–C216 and C233–C241.

It belongs to the somatotropin/prolactin family.

It localises to the secreted. This Rattus norvegicus (Rat) protein is Prolactin-7B1 (Prl7b1).